The sequence spans 296 residues: Phosphatidylglycerol--prolipoprotein diacylglyceryl transferase (296 aa).

The next 7 membrane-spanning stretches (helical) occupy residues 17–37 (LAVR…IVVG), 59–79 (MMFY…VLFY), 97–117 (GGMS…LFAW), 129–149 (FVAP…FING), 203–223 (PSQL…LFFF), 230–250 (LGAV…TVEF), and 265–285 (LSMG…LLVW). Arginine 142 lines the a 1,2-diacyl-sn-glycero-3-phospho-(1'-sn-glycerol) pocket.

It belongs to the Lgt family.

Its subcellular location is the cell inner membrane. It carries out the reaction L-cysteinyl-[prolipoprotein] + a 1,2-diacyl-sn-glycero-3-phospho-(1'-sn-glycerol) = an S-1,2-diacyl-sn-glyceryl-L-cysteinyl-[prolipoprotein] + sn-glycerol 1-phosphate + H(+). It participates in protein modification; lipoprotein biosynthesis (diacylglyceryl transfer). Catalyzes the transfer of the diacylglyceryl group from phosphatidylglycerol to the sulfhydryl group of the N-terminal cysteine of a prolipoprotein, the first step in the formation of mature lipoproteins. This chain is Phosphatidylglycerol--prolipoprotein diacylglyceryl transferase, found in Burkholderia ambifaria (strain MC40-6).